Reading from the N-terminus, the 507-residue chain is Pyridoxine 4-oxidase (507 aa).

The active-site Proton acceptor is the histidine 448.

The protein belongs to the GMC oxidoreductase family. As to quaternary structure, monomer. FAD serves as cofactor.

The enzyme catalyses pyridoxine + O2 = pyridoxal + H2O2. It participates in cofactor degradation; B6 vitamer degradation; pyridoxal from pyridoxine (oxidase route): step 1/1. This is Pyridoxine 4-oxidase (pno) from Microbacterium luteolum (Aureobacterium luteolum).